The sequence spans 418 residues: Protein FAM53A (418 aa).

2 disordered regions span residues 198 to 236 (TSPV…FNPR) and 248 to 269 (ETGN…LSRR). Over residues 205–229 (SSASSGFVDSSEGSTSSSTRWNSGG) the composition is skewed to low complexity. A compositionally biased stretch (polar residues) spans 248–265 (ETGNLLPSANSTPTSTPE). Residues 285-293 (KKSRLKRRR) carry the Nuclear localization signal motif.

The protein belongs to the FAM53 family.

The protein resides in the nucleus. May play an important role in neural development; the dorsomedial roof of the third ventricle. This chain is Protein FAM53A, found in Gallus gallus (Chicken).